Reading from the N-terminus, the 291-residue chain is uncharacterized protein (291 aa).

10 helical membrane passes run 5 to 23 (ILLS…YFST), 33 to 52 (IFGF…VFLF), 69 to 91 (PLLI…LFLW), 101 to 120 (VSFG…RLVF), 127 to 144 (VKFL…SNIL), 148 to 165 (GLSW…TYFA), 172 to 194 (INDL…YFAW), 209 to 228 (LLLL…TYIV), 235 to 257 (INVL…FLIG), and 262 to 284 (SETI…EGLV).

The protein belongs to the EamA transporter family.

It is found in the cell membrane. This is an uncharacterized protein from Pasteurella multocida (strain Pm70).